We begin with the raw amino-acid sequence, 458 residues long: Peptidyl-prolyl cis-trans isomerase FKBP4 (458 aa).

An N-acetylmethionine; in peptidyl-prolyl cis-trans isomerase FKBP4; alternate modification is found at methionine 1. Threonine 2 bears the N-acetylthreonine; in peptidyl-prolyl cis-trans isomerase FKBP4, N-terminally processed; partial mark. The PPIase FKBP-type 1 domain occupies 50–138 (GDRVFVHYTG…VFEVELFEFK (89 aa)). Residue threonine 143 is modified to Phosphothreonine; by CK2. Positions 167 to 253 (GAMVEVALEG…RYEVHLKSFE (87 aa)) constitute a PPIase FKBP-type 2 domain. Phosphotyrosine is present on tyrosine 220. The tract at residues 267 to 400 (LEQSNIVKER…TQLAVCQQRT (134 aa)) is interaction with tubulin. 3 TPR repeats span residues 270–303 (SNIV…LEYE), 319–352 (LASH…DSNN), and 353–386 (EKGL…YPSN). Position 282 is an N6-acetyllysine (lysine 282). At arginine 373 the chain carries Omega-N-methylarginine. The interval 423-458 (HKAKTEVAAGDHPTDAEMKGEPNNVAGNQAQVKTEA) is disordered. Threonine 436 bears the Phosphothreonine mark. Lysine 441 participates in a covalent cross-link: Glycyl lysine isopeptide (Lys-Gly) (interchain with G-Cter in SUMO1). The span at 447 to 458 (VAGNQAQVKTEA) shows a compositional bias: polar residues.

In terms of assembly, homodimer. Interacts with GLMN. Associates with HSP90AA1 and HSP70 in steroid hormone receptor complexes. Also interacts with peroxisomal phytanoyl-CoA alpha-hydroxylase (PHYH). Interacts with NR3C1 and dynein. Interacts with HSF1 in the HSP90 complex. Associates with tubulin. Interacts with MAPT/TAU. Interacts (via TPR domain) with S100A1, S100A2 and S100A6; the interaction is Ca(2+) dependent. Interaction with S100A1 and S100A2 (but not with S100A6) leads to inhibition of FKBP4-HSP90 interaction. Interacts with dynein; causes partially NR3C1 transport to the nucleus. Post-translationally, phosphorylation by CK2 results in loss of HSP90 binding activity. In terms of tissue distribution, widely detected in the brain (at protein level).

It is found in the cytoplasm. The protein localises to the cytosol. Its subcellular location is the mitochondrion. The protein resides in the nucleus. It localises to the cytoskeleton. It is found in the cell projection. The protein localises to the axon. It catalyses the reaction [protein]-peptidylproline (omega=180) = [protein]-peptidylproline (omega=0). Inhibited by FK506. Its function is as follows. Immunophilin protein with PPIase and co-chaperone activities. Component of unligated steroid receptors heterocomplexes through interaction with heat-shock protein 90 (HSP90). Plays a role in the intracellular trafficking of heterooligomeric forms of steroid hormone receptors between cytoplasm and nuclear compartments. May have a protective role against oxidative stress in mitochondria. Also acts as a regulator of microtubule dynamics by inhibiting MAPT/TAU ability to promote microtubule assembly. The PPIase activity controls neuronal growth cones via regulation of TRPC1 channel opening. The sequence is that of Peptidyl-prolyl cis-trans isomerase FKBP4 (Fkbp4) from Rattus norvegicus (Rat).